A 262-amino-acid chain; its full sequence is Transcription factor of morphogenesis MCM1 (262 aa).

Disordered stretches follow at residues methionine 1–lysine 62 and glutamate 140–glutamine 262. The span at asparagine 17–asparagine 35 shows a compositional bias: low complexity. The region spanning lysine 58–lysine 118 is the MADS-box domain. Residues glutamine 150–asparagine 170 are compositionally biased toward polar residues. 3 stretches are compositionally biased toward low complexity: residues glutamine 182 to glutamine 198, proline 224 to glycine 239, and asparagine 249 to glutamine 262.

Interacts with AHR1.

Its subcellular location is the nucleus. In terms of biological role, transcription factor that is recruited by AHR1 to the promoters of genes involved in biofilm formation, which include several key adhesion genes. Plays an important role in cell adhesion, hyphal growth and virulence. Implicated in the regulation of opaque-phase-specific gene expression. This Candida albicans (strain SC5314 / ATCC MYA-2876) (Yeast) protein is Transcription factor of morphogenesis MCM1 (MCM1).